Reading from the N-terminus, the 64-residue chain is uncharacterized protein (64 aa).

This is an uncharacterized protein from Sulfolobus islandicus rod-shaped virus 1 (SIRV-1).